The chain runs to 136 residues: Nanos homolog 2 (136 aa).

Positions Lys-27–Glu-51 are disordered. The span at Gln-28–Gln-48 shows a compositional bias: basic and acidic residues. Residues Ile-60–Leu-114 form a Nanos-type zinc finger. Zn(2+) is bound by residues Cys-61, Cys-64, His-77, Cys-88, Cys-96, Cys-99, His-107, and Cys-112. 2 short sequence motifs (C2HC) span residues Cys-61–Cys-88 and Cys-96–Cys-112.

Belongs to the nanos family. Interacts with CNOT1, CNOT3, CNOT6L, CNOT7 and CNOT9. In terms of tissue distribution, predominantly expressed in male germ cells. Expressed in self-renewing spermatogonial stem cells and developing gonads.

The protein resides in the cytoplasm. Its subcellular location is the P-body. It localises to the perinuclear region. Its function is as follows. Plays a key role in the sexual differentiation of germ cells by promoting the male fate but suppressing the female fate. Represses the female fate pathways by suppressing meiosis, which in turn results in the promotion of the male fate. Maintains the suppression of meiosis by preventing STRA8 expression, which is required for premeiotic DNA replication, after CYP26B1 is decreased. Regulates the localization of the CCR4-NOT deadenylation complex to P-bodies and plays a role in recruiting the complex to trigger the degradation of mRNAs involved in meiosis. Required for the maintenance of the spermatogonial stem cell population. Not essential for the assembly of P-bodies but is required for the maintenance of their normal state. The sequence is that of Nanos homolog 2 (Nanos2) from Mus musculus (Mouse).